A 334-amino-acid polypeptide reads, in one-letter code: Fructose-1,6-bisphosphatase class 1 (334 aa).

4 residues coordinate Mg(2+): glutamate 92, aspartate 114, leucine 116, and aspartate 117. Substrate contacts are provided by residues 117-120 (DGSS) and asparagine 209. Glutamate 281 provides a ligand contact to Mg(2+).

This sequence belongs to the FBPase class 1 family. In terms of assembly, homotetramer. The cofactor is Mg(2+).

The protein resides in the cytoplasm. It catalyses the reaction beta-D-fructose 1,6-bisphosphate + H2O = beta-D-fructose 6-phosphate + phosphate. Its pathway is carbohydrate biosynthesis; gluconeogenesis. The chain is Fructose-1,6-bisphosphatase class 1 from Nitrosomonas eutropha (strain DSM 101675 / C91 / Nm57).